The following is a 106-amino-acid chain: Ig kappa chain C region, B allele (106 aa).

Residues 5–102 (PTVSIFPPST…SSSPVVKSFN (98 aa)) form the Ig-like domain. A disulfide bridge links cysteine 26 with cysteine 86.

This is Ig kappa chain C region, B allele from Rattus norvegicus (Rat).